Reading from the N-terminus, the 248-residue chain is Undecaprenyl-diphosphatase (248 aa).

The next 8 membrane-spanning stretches (helical) occupy residues isoleucine 4 to leucine 24, phenylalanine 40 to valine 60, tyrosine 74 to phenylalanine 94, serine 101 to valine 121, isoleucine 134 to isoleucine 154, alanine 174 to threonine 194, serine 201 to leucine 221, and lysine 228 to glycine 248.

This sequence belongs to the UppP family.

Its subcellular location is the cell inner membrane. The enzyme catalyses di-trans,octa-cis-undecaprenyl diphosphate + H2O = di-trans,octa-cis-undecaprenyl phosphate + phosphate + H(+). In terms of biological role, catalyzes the dephosphorylation of undecaprenyl diphosphate (UPP). Confers resistance to bacitracin. The polypeptide is Undecaprenyl-diphosphatase (Thermosipho africanus (strain TCF52B)).